Reading from the N-terminus, the 517-residue chain is Serine hydroxymethyltransferase 2, mitochondrial (517 aa).

Residues Met-1–Met-29 constitute a mitochondrion transit peptide. Ser-82 contacts L-serine. Residues Ser-82, Tyr-102, Glu-104, Tyr-112, Ser-148 to Ser-150, and His-177 each bind pemetrexed. L-serine-binding residues include Glu-104 and Tyr-112. Glu-104 is a methotrexate binding site. Residue Thr-184–Thr-186 participates in methotrexate binding. 2 residues coordinate pemetrexed: Ser-232 and His-260. Residues His-260 and Lys-286 each contribute to the L-serine site. An N6-(pyridoxal phosphate)lysine modification is found at Lys-286. Residue Gly-331 participates in pemetrexed binding. Residue Lys-414 participates in methotrexate binding. Arg-430 contributes to the L-serine binding site. Arg-430 contacts pemetrexed.

It belongs to the SHMT family. Homotetramer. Pyridoxal 5'-phosphate is required as a cofactor. Ubiquitous. Mainly expressed in the shoot apical meristem and roots. Also detected in the leaf vasculature, especially in the protoxylem and adjacent cell layers.

It localises to the mitochondrion. It carries out the reaction (6R)-5,10-methylene-5,6,7,8-tetrahydrofolate + glycine + H2O = (6S)-5,6,7,8-tetrahydrofolate + L-serine. Its pathway is one-carbon metabolism; tetrahydrofolate interconversion. With respect to regulation, inhibited by the antifolate drugs methotrexate and pemetrexed. In terms of biological role, functions outside the photorespiratory pathway in catalyzing the interconversion of serine and glycine with the conversion of tetrahydrofolate (THF) into 5,10-methylene-THF. This chain is Serine hydroxymethyltransferase 2, mitochondrial, found in Arabidopsis thaliana (Mouse-ear cress).